The sequence spans 775 residues: Acetamidase regulatory protein (775 aa).

Polar residues predominate over residues 1-15 (MSSTAHNSQPSTGNG). The interval 1-20 (MSSTAHNSQPSTGNGVTKRK) is disordered. A DNA-binding region (zn(2)-C6 fungal-type) is located at residues 26–59 (CIHCHRRKVRCDARIVGLPCSNCRSAGKADCRIH). A compositionally biased stretch (polar residues) spans 126-153 (PHSSYTNGNHLSNNRGSQPITETQTFTR). Disordered stretches follow at residues 126–159 (PHSS…GADR) and 630–699 (ATSE…HQNQ). Over residues 630–644 (ATSERPRRFSTHDQN) the composition is skewed to basic and acidic residues. The span at 674–689 (PRPPYEVPTPESPRMP) shows a compositional bias: pro residues.

The protein resides in the nucleus. In terms of biological role, positively regulates the expression of genes involved in the catabolism of certain amides, omega amino acids, and lactams. In Aspergillus oryzae (strain ATCC 42149 / RIB 40) (Yellow koji mold), this protein is Acetamidase regulatory protein (amdR).